The chain runs to 597 residues: Elongation factor 4 (597 aa).

The tr-type G domain maps to D2–K184. Residues D14–T19 and N131–D134 each bind GTP.

This sequence belongs to the TRAFAC class translation factor GTPase superfamily. Classic translation factor GTPase family. LepA subfamily.

The protein resides in the cell inner membrane. The catalysed reaction is GTP + H2O = GDP + phosphate + H(+). Required for accurate and efficient protein synthesis under certain stress conditions. May act as a fidelity factor of the translation reaction, by catalyzing a one-codon backward translocation of tRNAs on improperly translocated ribosomes. Back-translocation proceeds from a post-translocation (POST) complex to a pre-translocation (PRE) complex, thus giving elongation factor G a second chance to translocate the tRNAs correctly. Binds to ribosomes in a GTP-dependent manner. This is Elongation factor 4 from Burkholderia pseudomallei (strain 1710b).